Consider the following 277-residue polypeptide: uncharacterized protein (277 aa).

This is an uncharacterized protein from Methanocaldococcus jannaschii (strain ATCC 43067 / DSM 2661 / JAL-1 / JCM 10045 / NBRC 100440) (Methanococcus jannaschii).